The sequence spans 289 residues: HTH-type transcriptional regulator HexR (289 aa).

An HTH rpiR-type domain is found at 1 to 77 (MNMLEKIQSQ…LHLAQSLANG (77 aa)). The H-T-H motif DNA-binding region spans 37–56 (IAAMALEANVSEPTVNRFCR). The 140-residue stretch at 121–260 (AVDLLTQAKK…ATGFTLRRGA (140 aa)) folds into the SIS domain.

Functionally, represses the expression of the hex regulon (zwf, eda, glp and gap). This chain is HTH-type transcriptional regulator HexR (hexR), found in Escherichia coli (strain K12).